Consider the following 292-residue polypeptide: Glutathione S-transferase L2, chloroplastic (292 aa).

The N-terminal 56 residues, 1–56 (MSVGLKVSAFLHPTLALSSRDVSLSSSSSSLYLDRKILRPGSGRRWCKSRRTEPIL), are a transit peptide targeting the chloroplast. The 82-residue stretch at 79–160 (GSTRLYISYT…YIDTNFEGPS (82 aa)) folds into the GST N-terminal domain. Residues 89–90 (CP), 117–118 (NR), 131–132 (KV), and 144–145 (ES) contribute to the glutathione site. The GST C-terminal domain occupies 130 to 286 (NKVPALEHNN…ELVERYKRRV (157 aa)).

Belongs to the GST superfamily. Lambda family.

It localises to the plastid. Its subcellular location is the chloroplast. It catalyses the reaction RX + glutathione = an S-substituted glutathione + a halide anion + H(+). Catalyzes the glutathione-dependent reduction of S-glutathionylquercetin to quercetin. In vitro, possesses glutathione-dependent thiol transferase activity toward 2-hydroxyethyl disulfide (HED). This chain is Glutathione S-transferase L2, chloroplastic (GSTL2), found in Arabidopsis thaliana (Mouse-ear cress).